Consider the following 357-residue polypeptide: Spore wall and anchoring disk complex protein EnP1 (357 aa).

The N-terminal stretch at 1–16 (MKLLGFLIVGLSAISA) is a signal peptide. N47 is a glycosylation site (N-linked (GlcNAc...) asparagine). Positions 150–158 (ERRPHYKKI) match the HBM1 motif. Positions 329–334 (LKKVRG) match the HBM2 motif.

The protein resides in the spore wall. Its subcellular location is the spore. It is found in the perispore. Functionally, spore wall protein involved in the adhesion to host cells surface glycoaminoglycans (GAGs). Microsporidian spore adherence is an integral part of activation and host cell invasion which requires the extrusion at the spore apex of a very long and coiled structure, the polar tube, through which the sporoplasm is pushed to enter into the potential host cell. The chain is Spore wall and anchoring disk complex protein EnP1 (EnP1) from Encephalitozoon cuniculi (strain GB-M1) (Microsporidian parasite).